The chain runs to 260 residues: MFYMLGKRRRMSRIMKNGRTVILPMDHGITKPEKGIEKVDRVVEEVQDYIDAVIVHKGVAKRSAVLADIDAALIIHLSASTSLAPDPNDKRIVTSVEKAIALGADAVSIHVNIGSKTEAEQIEKAGTISEICDDYGIPLLAMMYPRGSIDVTTETVRHAARIGYELGADILKVPYVQSFEEVVAVCDIPVVVAGGSKGSEHEFLKRVEDAIAKGAAGVAAGRNVFNSDHPVRIAKALHMIVHGNMHMEEVMEYEGNMVVG.

The active-site Proton acceptor is the Asp-26. Residues 26–30 (DHGIT) and 144–146 (YPR) each bind 1-deoxy-D-threo-hexo-2,5-diulose 6-phosphate. Tyr-144 serves as the catalytic Proton donor. Lys-172 serves as the catalytic Schiff-base intermediate with substrate. Residues 194 to 195 (GG) and 221 to 222 (GR) contribute to the 1-deoxy-D-threo-hexo-2,5-diulose 6-phosphate site.

The protein belongs to the DeoC/FbaB aldolase family. ADHS subfamily. As to quaternary structure, homodecamer.

It catalyses the reaction 1-deoxy-D-threo-hexo-2,5-diulose 6-phosphate + L-aspartate 4-semialdehyde = 2,3-dioxopropyl phosphate + 2-amino-2,3,7-trideoxy-D-lyxo-hept-6-ulosonate. Functionally, catalyzes a transaldol reaction between 6-deoxy-5-ketofructose 1-phosphate (DKFP) and L-aspartate semialdehyde (ASA) with an elimination of hydroxypyruvaldehyde phosphate to yield 2-amino-3,7-dideoxy-D-threo-hept-6-ulosonate (ADH). Plays a key role in an alternative pathway of the biosynthesis of 3-dehydroquinate (DHQ), which is involved in the canonical pathway for the biosynthesis of aromatic amino acids. The sequence is that of 2-amino-3,7-dideoxy-D-threo-hept-6-ulosonate synthase 1 from Archaeoglobus fulgidus (strain ATCC 49558 / DSM 4304 / JCM 9628 / NBRC 100126 / VC-16).